Here is a 258-residue protein sequence, read N- to C-terminus: Cytochrome b-c1 complex subunit Rieske-1, mitochondrial (258 aa).

The N-terminal 46 residues, 1–46 (WPVRSAAPSSSAFISANHFSSDDDSSSPRSISPSLASVFLHHTRGF), are a transit peptide targeting the mitochondrion. Residues 47–95 (SSNSVSPAHDMGLVPDLPPTVAAIKNPTSKIVYDEHNHERYPPGDPSKR) lie on the Mitochondrial matrix side of the membrane. Residues 96–118 (AFAYFVLTGGRFVYASLMRLLIL) traverse the membrane as a helical segment. The Mitochondrial intermembrane segment spans residues 119-258 (KFVLSMSASK…FLEENKLLIG (140 aa)). The 96-residue stretch at 161–256 (RRRTEDDISL…YSFLEENKLL (96 aa)) folds into the Rieske domain. The [2Fe-2S] cluster site is built by C201, H203, C220, and H223. An intrachain disulfide couples C206 to C222.

This sequence belongs to the Rieske iron-sulfur protein family. In terms of assembly, component of the ubiquinol-cytochrome c oxidoreductase (cytochrome b-c1 complex, complex III, CIII), a multisubunit enzyme composed of 3 respiratory subunits cytochrome b, cytochrome c1 and Rieske protein, 2 core protein subunits, and several low-molecular weight protein subunits. The complex exists as an obligatory dimer and forms supercomplexes (SCs) in the inner mitochondrial membrane with cytochrome c oxidase (complex IV, CIV). It depends on [2Fe-2S] cluster as a cofactor.

Its subcellular location is the mitochondrion inner membrane. It catalyses the reaction a quinol + 2 Fe(III)-[cytochrome c](out) = a quinone + 2 Fe(II)-[cytochrome c](out) + 2 H(+)(out). In terms of biological role, component of the ubiquinol-cytochrome c oxidoreductase, a multisubunit transmembrane complex that is part of the mitochondrial electron transport chain which drives oxidative phosphorylation. The respiratory chain contains 3 multisubunit complexes succinate dehydrogenase (complex II, CII), ubiquinol-cytochrome c oxidoreductase (cytochrome b-c1 complex, complex III, CIII) and cytochrome c oxidase (complex IV, CIV), that cooperate to transfer electrons derived from NADH and succinate to molecular oxygen, creating an electrochemical gradient over the inner membrane that drives transmembrane transport and the ATP synthase. The cytochrome b-c1 complex catalyzes electron transfer from ubiquinol to cytochrome c, linking this redox reaction to translocation of protons across the mitochondrial inner membrane, with protons being carried across the membrane as hydrogens on the quinol. In the process called Q cycle, 2 protons are consumed from the matrix, 4 protons are released into the intermembrane space and 2 electrons are passed to cytochrome c. The Rieske protein is a catalytic core subunit containing a [2Fe-2S] iron-sulfur cluster. It cycles between 2 conformational states during catalysis to transfer electrons from the quinol bound in the Q(0) site in cytochrome b to cytochrome c1. The chain is Cytochrome b-c1 complex subunit Rieske-1, mitochondrial from Nicotiana tabacum (Common tobacco).